Consider the following 145-residue polypeptide: D-aminoacyl-tRNA deacylase (145 aa).

The Gly-cisPro motif, important for rejection of L-amino acids motif lies at 137-138 (GP).

The protein belongs to the DTD family. Homodimer.

The protein resides in the cytoplasm. It catalyses the reaction glycyl-tRNA(Ala) + H2O = tRNA(Ala) + glycine + H(+). It carries out the reaction a D-aminoacyl-tRNA + H2O = a tRNA + a D-alpha-amino acid + H(+). In terms of biological role, an aminoacyl-tRNA editing enzyme that deacylates mischarged D-aminoacyl-tRNAs. Also deacylates mischarged glycyl-tRNA(Ala), protecting cells against glycine mischarging by AlaRS. Acts via tRNA-based rather than protein-based catalysis; rejects L-amino acids rather than detecting D-amino acids in the active site. By recycling D-aminoacyl-tRNA to D-amino acids and free tRNA molecules, this enzyme counteracts the toxicity associated with the formation of D-aminoacyl-tRNA entities in vivo and helps enforce protein L-homochirality. In Sodalis glossinidius (strain morsitans), this protein is D-aminoacyl-tRNA deacylase.